A 111-amino-acid polypeptide reads, in one-letter code: Regulator of ribonuclease activity B (111 aa).

Belongs to the RraB family. As to quaternary structure, interacts with the C-terminal region of Rne.

It localises to the cytoplasm. Its function is as follows. Globally modulates RNA abundance by binding to RNase E (Rne) and regulating its endonucleolytic activity. Can modulate Rne action in a substrate-dependent manner by altering the composition of the degradosome. This Pseudoalteromonas translucida (strain TAC 125) protein is Regulator of ribonuclease activity B.